Reading from the N-terminus, the 208-residue chain is FMN-dependent NADH:quinone oxidoreductase 1 (208 aa).

17-19 (SVS) provides a ligand contact to FMN.

The protein belongs to the azoreductase type 1 family. Homodimer. FMN serves as cofactor.

It catalyses the reaction 2 a quinone + NADH + H(+) = 2 a 1,4-benzosemiquinone + NAD(+). It carries out the reaction N,N-dimethyl-1,4-phenylenediamine + anthranilate + 2 NAD(+) = 2-(4-dimethylaminophenyl)diazenylbenzoate + 2 NADH + 2 H(+). Functionally, quinone reductase that provides resistance to thiol-specific stress caused by electrophilic quinones. In terms of biological role, also exhibits azoreductase activity. Catalyzes the reductive cleavage of the azo bond in aromatic azo compounds to the corresponding amines. This Listeria monocytogenes serovar 1/2a (strain ATCC BAA-679 / EGD-e) protein is FMN-dependent NADH:quinone oxidoreductase 1.